We begin with the raw amino-acid sequence, 530 residues long: Amidase FVEG_08295 (530 aa).

Active-site charge relay system residues include K138 and S214. Substrate is bound by residues S214 and 235–238 (IAGS). Residue S238 is the Acyl-ester intermediate of the active site.

This sequence belongs to the amidase family.

It carries out the reaction a monocarboxylic acid amide + H2O = a monocarboxylate + NH4(+). It participates in xenobiotic degradation. Amidase; part of the Fusarium detoxification of benzoxazolinone cluster 1 (FDB1) involved in the degradation of benzoxazolinones produced by the host plant. Maize, wheat, and rye produce the 2 benzoxazinone phytoanticipins 2,4-dihy-droxy-7-methoxy-1,4-benzoxazin-3-one (DIMBOA) and 2,4-dihydroxy-1,4-benzoxazin-3-one (DIBOA) that, due to their inherent instability once released, spontaneously degrade to the more stable corresponding benzoxazolinones, 6-methoxy-2-benzoxazolinone (MBOA) and 2-benzoxazolinone (BOA), respectively. The first step in the detoxification of benzoxazolinones involves the hydrolysis of the cyclic ester bond of benzoxazolinones by the FDB1 cluster gamma-lactamase MBL1 to aminophenols. MBL1 is able to convert BOA into 2-aminophenol (2-AP), as well as MBOA into 5-methoxy-2-aminophenol (2-AMP). The FDB2 cluster N-malonyltransferase FDB2/NAT1 then metabolizes aminophenols via N-malonylation to non-toxic malonamic acids. FDB2/NAT1 converts 2-AP into N-(2-hydroxyphenyl) malonamic acid (HPMA) and 2-AMP into N-(2-hydroxy-4-methoxyphenyl) malonamic acid (HMPMA). The duplicated dienlactone hydrolases DLH1 and DLH2 may provide redundant function for hydrolyzing the lactone moiety in the BOA molecule. The roles of the amidases an other enzymes encoded by the 2 FDB clusters have not been identified so far. The protein is Amidase FVEG_08295 of Gibberella moniliformis (strain M3125 / FGSC 7600) (Maize ear and stalk rot fungus).